We begin with the raw amino-acid sequence, 1334 residues long: Putative transmembrane protein ORF1334 (1334 aa).

Residues 53 to 73 form a helical membrane-spanning segment; the sequence is VSIVVLVLTLFIIPVIIPPAH. The disordered stretch occupies residues 1107–1135; sequence LSASTTPPSSTTPTPPSSSSSSSSSSSIS. Low complexity predominate over residues 1110 to 1135; sequence STTPPSSTTPTPPSSSSSSSSSSSIS. A run of 3 helical transmembrane segments spans residues 1256-1276, 1292-1312, and 1313-1333; these read AVLP…SFFI, IIYI…TSVV, and YGTV…SRSQ.

The protein resides in the host membrane. The polypeptide is Putative transmembrane protein ORF1334 (Acidianus two-tailed virus (ATV)).